The primary structure comprises 597 residues: Aspartate--tRNA(Asp/Asn) ligase (597 aa).

Position 172 (E172) interacts with L-aspartate. The interval 196-199 is aspartate; that stretch reads QLFK. R218 provides a ligand contact to L-aspartate. ATP is bound by residues 218-220 and Q227; that span reads RDE. H454 provides a ligand contact to L-aspartate. An ATP-binding site is contributed by E488. R495 contributes to the L-aspartate binding site. Residue 540 to 543 participates in ATP binding; it reads GLDR.

It belongs to the class-II aminoacyl-tRNA synthetase family. Type 1 subfamily. In terms of assembly, homodimer.

The protein resides in the cytoplasm. The enzyme catalyses tRNA(Asx) + L-aspartate + ATP = L-aspartyl-tRNA(Asx) + AMP + diphosphate. Its function is as follows. Aspartyl-tRNA synthetase with relaxed tRNA specificity since it is able to aspartylate not only its cognate tRNA(Asp) but also tRNA(Asn). Reaction proceeds in two steps: L-aspartate is first activated by ATP to form Asp-AMP and then transferred to the acceptor end of tRNA(Asp/Asn). The sequence is that of Aspartate--tRNA(Asp/Asn) ligase from Chromobacterium violaceum (strain ATCC 12472 / DSM 30191 / JCM 1249 / CCUG 213 / NBRC 12614 / NCIMB 9131 / NCTC 9757 / MK).